The primary structure comprises 500 residues: NAD(P)H-quinone oxidoreductase chain 4, chloroplastic (500 aa).

Transmembrane regions (helical) follow at residues 4-24 (FPWL…IFFL), 31-51 (VIFW…TYAF), 84-104 (GLSI…TLAA), 111-131 (ARLF…LFSC), 134-154 (LLLF…LLSM), 167-187 (FILY…GIGL), 212-232 (IFYI…PLHT), 242-262 (HYST…YGLV), 272-292 (AHSL…IYAA), 308-328 (SSVS…DIGL), 330-350 (GALL…FLAG), 386-406 (LALP…GLIT), 411-431 (LLMA…LTPI), and 462-482 (LFLS…PDFV).

Belongs to the complex I subunit 4 family.

The protein localises to the plastid. It localises to the chloroplast thylakoid membrane. It catalyses the reaction a plastoquinone + NADH + (n+1) H(+)(in) = a plastoquinol + NAD(+) + n H(+)(out). The enzyme catalyses a plastoquinone + NADPH + (n+1) H(+)(in) = a plastoquinol + NADP(+) + n H(+)(out). The chain is NAD(P)H-quinone oxidoreductase chain 4, chloroplastic from Jasminum nudiflorum (Winter jasmine).